Consider the following 406-residue polypeptide: 3-oxoacyl-[acyl-carrier-protein] synthase 1 (406 aa).

The region spanning 1–405 is the Ketosynthase family 3 (KS3) domain; the sequence is MRRVVITGIG…GTNVSLIVKK (405 aa). Catalysis depends on for beta-ketoacyl synthase activity residues Cys164, His299, and His335.

This sequence belongs to the thiolase-like superfamily. Beta-ketoacyl-ACP synthases family. In terms of assembly, homodimer.

It localises to the cytoplasm. It catalyses the reaction a fatty acyl-[ACP] + malonyl-[ACP] + H(+) = a 3-oxoacyl-[ACP] + holo-[ACP] + CO2. The enzyme catalyses (3Z)-decenoyl-[ACP] + malonyl-[ACP] + H(+) = 3-oxo-(5Z)-dodecenoyl-[ACP] + holo-[ACP] + CO2. It functions in the pathway lipid metabolism; fatty acid biosynthesis. Its function is as follows. Involved in the type II fatty acid elongation cycle. Catalyzes the elongation of a wide range of acyl-ACP by the addition of two carbons from malonyl-ACP to an acyl acceptor. Can also use unsaturated fatty acids. Catalyzes a key reaction in unsaturated fatty acid (UFA) synthesis, the elongation of the cis-3-decenoyl-ACP produced by FabA. The protein is 3-oxoacyl-[acyl-carrier-protein] synthase 1 (fabB) of Buchnera aphidicola subsp. Acyrthosiphon pisum (strain APS) (Acyrthosiphon pisum symbiotic bacterium).